The sequence spans 425 residues: tRNA(Ile)-lysidine synthase (425 aa).

27–32 (SGGLDS) lines the ATP pocket.

It belongs to the tRNA(Ile)-lysidine synthase family.

It localises to the cytoplasm. It catalyses the reaction cytidine(34) in tRNA(Ile2) + L-lysine + ATP = lysidine(34) in tRNA(Ile2) + AMP + diphosphate + H(+). Functionally, ligates lysine onto the cytidine present at position 34 of the AUA codon-specific tRNA(Ile) that contains the anticodon CAU, in an ATP-dependent manner. Cytidine is converted to lysidine, thus changing the amino acid specificity of the tRNA from methionine to isoleucine. In Streptococcus pneumoniae serotype 2 (strain D39 / NCTC 7466), this protein is tRNA(Ile)-lysidine synthase.